Here is a 43-residue protein sequence, read N- to C-terminus: Protein PsbN (43 aa).

The helical transmembrane segment at 7-27 threads the bilayer; it reads LIIFIASLLLGLTGYSIYTAF.

Belongs to the PsbN family.

The protein localises to the plastid. It is found in the chloroplast thylakoid membrane. May play a role in photosystem I and II biogenesis. In Guillardia theta (Cryptophyte), this protein is Protein PsbN.